The primary structure comprises 2890 residues: MSKKIPLKNRLRADFTKTPTDLEVPNLLLLQRDSYDSFLYSKDGKESGIEKVFKSIFPIQDEHNRITLEYAGCEFGKSKYTVREAMERGITYSIPLKIKVRLILWEKDTKSGEKNGIKDIKEQSIFIREIPLMTERTSFIINGVERVVVNQLYRSPGVIFKEEESSTSSNKLIYTGQIIPDRGSWLYFEYDSKDVLYARINKRRKVPVTILFRAMDYQKQDIIKMFYPLVKVRYENDKYLIPFASLDANQRMEFDLKDPQGKIILLAGKKLTSRKIKELKENHLEWVEYPMDILLNRHLAEPVMVGKEVLLDMLTQLDKNRLEKIHDLGVQEFVIINDLALGHDASIIHSFSADHESLKLLKQTEKIDDENALAAIRIHKVMKPGDPVTTEVAKQFVKKLFFDPERYDLTMVGRMKMNHKLGLHVPDYITTLTHEDIITTVKYLMKIKNNQGKIDDRDHLGNRRIRAVGELLANELHSGLVKMQKTIKDKLTTMSGAFDSLMPHDLVNSKMITSTIMEFFMGGQLSQFMDQTNPLSEVTHKRRLSALGEGGLVKDRVGFEARDVHPTYYGQFGPIETPEGQNIGLINTLSTFTRVNDLGFIEAPYKKVVDGKVAGETIYLTAIQEDSHIIAPASTPIDEEGNILGDLIETRVEGEIVLNEKSKVTLMDLSSSMLVGVAASLIPFLEHDDANRALMGTNMQRQAVPLLRSDAPIVGTGIEKIIARDSWGAIKANRAGVVEKIDSKNIYILGEGKEEAYIDAYSLQKNLRTNQNTSFNQVPIVKVGDKVEAGQIIADGPSMDRGELALGKNVRVAFMPWNGYNFEDAIVVSERITKDDVFTSTHIYEKEVDARELKHGVEEFTADIPDVKEEALAHLDESGIVKVGTYVSAGMILVGKTSPKGEIKSTPEERLLRAIFGDKAGHVVNKSLYCPPSLEGTVIDVKVFTKKGYEKDARVLSAYEEEKAKLDMEHFDRLTMLNREELLRVSSLLSQAILEEPFSHNGKDYKEGDQIPKEEIASINRFTLASLVKKYSKEVQNHYEITKNNFLEQKKVLGEEHEEKLSILEKDDILPNGVIKKVKLYIATKRKLKVGDKMAGRHGNKGIVSNIVPVADMPYTADGEPVDIVLNPLGVPSRMNIGQILEMHLGLVGKEFGKQIASMLEDKTKDFAKELRAKMLEIANAINEKDPLTIHVLENCSDEELLEYAKDWSKGVKMAIPVFEGISQEKFYKLFELAKIAMDGKMDLYDGRTGEKMRERVNVGYMYMIKLHHLVDEKVHARSTGPYSLVTHQPVGGKALFGGQRFGEMEVWALEAYGAAHTLKEMLTIKSDDIRGRENAYRAIAKGEQVGESEIPETFYVLTKELQSLALDINIFGDDVDEDGAPRPIMIKEDDRPKDFSSFQLTLASPEKIHSWSYGEVKKPETINYRTLKPERDGLFCMKIFGPTKDYECLCGKYKKPRFKDIGTCEKCGVAITHSKVRRFRMGHIELATPVAHIWYVNSLPSRIGTLLGVKMKDLERVLYYEAYIVKEPGEAAYDNEGTKLVMKYDILNEEQYQNISRRYEDRGFVAQMGGEAIKDLLEEIDLITLLQSLKEEVKDTNSDAKKKKLIKRLKVVESFLNSGNRPEWMMLTVLPVLPPDLRPLVALDGGKFAVSDVNELYRRVINRNQRLKRLMELGAPEIIVRNEKRMLQEAVDVLFDNGRSTNAVKGANKRPLKSLSEIIKGKQGRFRQNLLGKRVDFSGRSVIVVGPNLKMDECGLPKNMALELFKPHLLSKLEERGYATTLKQAKRMIEQKSNEVWECLQEITEGYPVLLNRAPTLHKQSIQAFHPKLIDGKAIQLHPLVCSAFNADFDGDQMAVHVPLSQEAIAECKVLMLSSMNILLPASGKAVAIPSQDMVLGLYYLSLEKSGVKGEHKLFSSVNEIITAIDTKELDIHAKIRVLDQGNIIATSAGRMIIKSILPDFIPTDLWNRPMKKKDIGVLVDYVHKVGGIGITATFLDHLKTLGFRYATKAGISISMEDIITPKDKQKMVEKAKVEVKKIQQQYDQGLLTDQERYNKIIDTWTEVNDRMSKEMMSAIAKDKEGFNSIYMMADSGARGSAAQIRQLSAMRGLMTKPDGSIIETPIISNFKEGLNVLEYFNSTHGARKGLADTALKTANAGYLTRKLIDVSQNVKVVSDDCGTHEGIEITDIAVGSELIEPLEERIFGRVLLEDVIDPITNEILLYADTLIDEEGAKKVVEAGIKSITIRTPVTCKAPKGVCAKCYGLNLGEGKMSYPGEAVGVVAAQSIGEPGTQLTLRTFHVGGTASRSQDEREIVASKEGFVRFYNLRTYTNKEGKNIIANRRNASILVVEPKIKAPFDGELRIETVYEEVVVSVKNGDQEAKFVLRRSDIVKPSELAGVGGKIEGKVYLPYASGHKVHKGGSIADIIQEGWNVPNRIPYASELLVKDNDPIAQDVYAKEKGVIKYYVLEANHLERTHGVKKGDIVSEKGLFAVVADDNGREAARHYIARGSEILIDDNSEVSANSVISKPTTNTFKTIATWDPYNTPIIADFKGKVNFVDVIAGVTVAEKEDENTGITSLVVNDYIPSGYKPSLFLEGANGEEMRYFLEPKTSIAISDGSSVEQAEVLAKIPKATVKSRDITGGLPRVSELFEARKPKPKDVAILSEVDGIVSFGKPIRNKEHIIVTSKDGRLTDYFVDKGKQILVHADEFVHAGEAMTDGVVSSHDILRISGEKELYKYIVSEVQQVYRRQGVSIADKHIEIIVSQMLRQVRILDSGDSKFIEGDLVSKKLFKEENTRVIALKGEPAIAEPVLLGITRAAIGSDSIISAASFQETTKVLTEASIAMKKDFLEDLKENVVLGRMIPVGTGMYKNKKIVLRALEDNSKF.

Positions 1-1377 are DNA-directed RNA polymerase subunit beta; sequence MSKKIPLKNR…DINIFGDDVD (1377 aa). The interval 1384–2890 is DNA-directed RNA polymerase subunit beta'; that stretch reads PIMIKEDDRP…LRALEDNSKF (1507 aa). Zn(2+) contacts are provided by cysteine 1449, cysteine 1451, cysteine 1465, and cysteine 1468. Residues aspartate 1849, aspartate 1851, and aspartate 1853 each coordinate Mg(2+). Cysteine 2179, cysteine 2253, cysteine 2260, and cysteine 2263 together coordinate Zn(2+).

In the N-terminal section; belongs to the RNA polymerase beta chain family. The protein in the C-terminal section; belongs to the RNA polymerase beta' chain family. As to quaternary structure, the RNAP catalytic core consists of 2 alpha, 1 beta/beta' and 1 omega subunit. When a sigma factor is associated with the core the holoenzyme is formed, which can initiate transcription. Mg(2+) serves as cofactor. Zn(2+) is required as a cofactor.

The enzyme catalyses RNA(n) + a ribonucleoside 5'-triphosphate = RNA(n+1) + diphosphate. Functionally, DNA-dependent RNA polymerase catalyzes the transcription of DNA into RNA using the four ribonucleoside triphosphates as substrates. This Helicobacter pylori (strain J99 / ATCC 700824) (Campylobacter pylori J99) protein is Bifunctional DNA-directed RNA polymerase subunit beta-beta' (rpoBC).